Consider the following 277-residue polypeptide: Putative phosphoenolpyruvate synthase regulatory protein (277 aa).

ADP is bound at residue 157–164 (GVSRSGKT).

This sequence belongs to the pyruvate, phosphate/water dikinase regulatory protein family. PSRP subfamily.

It carries out the reaction [pyruvate, water dikinase] + ADP = [pyruvate, water dikinase]-phosphate + AMP + H(+). The enzyme catalyses [pyruvate, water dikinase]-phosphate + phosphate + H(+) = [pyruvate, water dikinase] + diphosphate. Its function is as follows. Bifunctional serine/threonine kinase and phosphorylase involved in the regulation of the phosphoenolpyruvate synthase (PEPS) by catalyzing its phosphorylation/dephosphorylation. This Vibrio vulnificus (strain CMCP6) protein is Putative phosphoenolpyruvate synthase regulatory protein.